We begin with the raw amino-acid sequence, 1130 residues long: Serine/threonine-protein kinase LATS1 (1130 aa).

Residues 1-11 (MKRSEKPEGYR) are compositionally biased toward basic and acidic residues. Residues 1–71 (MKRSEKPEGY…PRQVRNPPKF (71 aa)) are disordered. Positions 19–30 (PASNYTVSSRQM) are enriched in polar residues. Positions 46–64 (DAAKAEHNMSKMSTEDPRQ) are enriched in basic and acidic residues. One can recognise a UBA domain in the interval 100–141 (EVNPQMLQDLQAAGFDEDMVIQALQKTNNRSIEAAIEFISKM). Residues 149–276 (EQMAAAAARP…SWEPNSQTKR (128 aa)) form a disordered region. Residues 167–179 (NVQQSVNRKQSWK) are compositionally biased toward polar residues. Pro residues predominate over residues 235-268 (NPPPPPQVRSVTPPPPPRGQTPPPRGTTPPPPSW). T246 carries the phosphothreonine modification. S278 carries the post-translational modification Phosphoserine. Disordered regions lie at residues 294-321 (GAWQ…RGIS), 365-405 (AGTV…NGSI), 432-484 (NWPQ…PSAT), and 515-631 (THPS…ESRI). A compositionally biased stretch (pro residues) spans 300–312 (YPPPPLNTSPMNP). The PPxY motif 1 motif lies at 373–376 (PPPY). A compositionally biased stretch (polar residues) spans 381–405 (ANGQSPSALQTGGSAAPSSYTNGSI). Over residues 434–447 (PQSSSAPAQSSPSS) the composition is skewed to low complexity. Over residues 454–482 (WQPNIPVRSNSFNNPLGNRASHSANSQPS) the composition is skewed to polar residues. A Phosphoserine; by NUAK1 and NUAK2 modification is found at S464. An interaction with YAP1 region spans residues 526–655 (TVQPSPFPEG…HVENVLKSHQ (130 aa)). The PPxY motif 2 signature appears at 556 to 559 (PPPY). Over residues 579-609 (PSKEDQPSLPKEDESEKSYENVDSGDKEKKQ) the composition is skewed to basic and acidic residues. The residue at position 613 (S613) is a Phosphoserine. Residues 621–630 (KKDEERRESR) show a composition bias toward basic and acidic residues. The residue at position 674 (S674) is a Phosphoserine. Residues 705-1010 (FVKIKTLGIG…ADEIKAHPFF (306 aa)) enclose the Protein kinase domain. Residues 711–719 (LGIGAFGEV) and K734 contribute to the ATP site. The Proton acceptor role is filled by D828. Position 909 is a phosphoserine; by STK3/MST2 (S909). The region spanning 1011-1090 (KTIDFSSDLR…RRFFDDNGYP (80 aa)) is the AGC-kinase C-terminal domain. A Phosphothreonine; by STK3/MST2 modification is found at T1079. The disordered stretch occupies residues 1104-1130 (SQGSEQQSDEDDQNTGSEIKNRDLVYV).

This sequence belongs to the protein kinase superfamily. AGC Ser/Thr protein kinase family. As to quaternary structure, complexes with CDK1 in early mitosis. LATS1-associated CDK1 has no mitotic cyclin partner and no apparent kinase activity. Binds phosphorylated ZYX, locating this protein to the mitotic spindle and suggesting a role for actin regulatory proteins during mitosis. Binds to and colocalizes with LIMK1 at the actomyosin contractile ring during cytokinesis. Interacts (via PPxY motif 2) with YAP1 (via WW domains). Interacts with MOB1A and MOB1B. Interacts with LIMD1, WTIP and AJUBA. Interacts with ESR1, DCAF1 and DCAF13; probably recruits DCAF1 and DCAF13 to ESR1 to promote ESR1 ubiquitination and ubiquitin-mediated proteasomal degradation. Interacts with STK3/MST2; this interaction is inhibited in the presence of DLG5. Interacts with SCRIB in the presence of DLG5. Interacts with WWTR1/TAZ. Interacts with WWC1, WWC2 and WWC3 (via their WW domains). It depends on Mg(2+) as a cofactor. Autophosphorylated and phosphorylated during M-phase of the cell cycle. Phosphorylated by STK3/MST2 at Ser-909 and Thr-1079, which results in its activation. Phosphorylated by MAP4Ks; in parallel to STK3/MST2 and resulting to its activation. Phosphorylation at Ser-464 by NUAK1 and NUAK2 leads to decreased protein level and is required to regulate cellular senescence and cellular ploidy. In terms of tissue distribution, expressed in all adult tissues examined except for lung and kidney.

The protein localises to the cytoplasm. It is found in the cytoskeleton. It localises to the microtubule organizing center. The protein resides in the centrosome. Its subcellular location is the spindle. The protein localises to the midbody. It is found in the spindle pole body. The enzyme catalyses L-seryl-[protein] + ATP = O-phospho-L-seryl-[protein] + ADP + H(+). The catalysed reaction is L-threonyl-[protein] + ATP = O-phospho-L-threonyl-[protein] + ADP + H(+). Its function is as follows. Negative regulator of YAP1 in the Hippo signaling pathway that plays a pivotal role in organ size control and tumor suppression by restricting proliferation and promoting apoptosis. The core of this pathway is composed of a kinase cascade wherein STK3/MST2 and STK4/MST1, in complex with its regulatory protein SAV1, phosphorylates and activates LATS1/2 in complex with its regulatory protein MOB1, which in turn phosphorylates and inactivates YAP1 oncoprotein and WWTR1/TAZ. Phosphorylation of YAP1 by LATS1 inhibits its translocation into the nucleus to regulate cellular genes important for cell proliferation, cell death, and cell migration. Acts as a tumor suppressor which plays a critical role in maintenance of ploidy through its actions in both mitotic progression and the G1 tetraploidy checkpoint. Negatively regulates G2/M transition by down-regulating CDK1 kinase activity. Involved in the control of p53 expression. Affects cytokinesis by regulating actin polymerization through negative modulation of LIMK1. May also play a role in endocrine function. Plays a role in mammary gland epithelial cell differentiation, both through the Hippo signaling pathway and the intracellular estrogen receptor signaling pathway by promoting the degradation of ESR1. Acts as an activator of the NLRP3 inflammasome by mediating phosphorylation of 'Ser-265' of NLRP3 following NLRP3 palmitoylation, promoting NLRP3 activation by NEK7. This chain is Serine/threonine-protein kinase LATS1, found in Homo sapiens (Human).